Consider the following 307-residue polypeptide: Opsin-like protein carO (307 aa).

The N-linked (GlcNAc...) asparagine glycan is linked to Asn-28. Transmembrane regions (helical) follow at residues 36–56 (WYWA…GLGM), 64–84 (IFHY…FTMA), 118–138 (WFLT…MPWP), 140–160 (VLWV…GALV), 166–186 (WGYF…LAWE), 202–222 (FVMC…AWGV), and 235–255 (AVFY…LLLW). A disordered region spans residues 280–307 (GPNNKVASGHGARNDTATASGSNVNPNA). N-linked (GlcNAc...) asparagine glycosylation occurs at Asn-293. Positions 294 to 307 (DTATASGSNVNPNA) are enriched in polar residues.

This sequence belongs to the archaeal/bacterial/fungal opsin family.

Its subcellular location is the membrane. Functionally, opsin-like protein; part of the car gene cluster that mediates the biosynthesis of neurosporaxanthin, a carboxylic apocarotenoid acting as an essential protective pigment and leading to orange pigmentation. The exact role of carO in carotenoid biosynthesis is not known yet, but it could be involved in the regulation of the pathway by light or other stimuli. This chain is Opsin-like protein carO, found in Fusarium fujikuroi (Bakanae and foot rot disease fungus).